Reading from the N-terminus, the 93-residue chain is Phosphoribosyl-ATP pyrophosphatase (93 aa).

It belongs to the PRA-PH family.

The protein resides in the cytoplasm. The catalysed reaction is 1-(5-phospho-beta-D-ribosyl)-ATP + H2O = 1-(5-phospho-beta-D-ribosyl)-5'-AMP + diphosphate + H(+). The protein operates within amino-acid biosynthesis; L-histidine biosynthesis; L-histidine from 5-phospho-alpha-D-ribose 1-diphosphate: step 2/9. This is Phosphoribosyl-ATP pyrophosphatase (hisE) from Mycobacterium bovis (strain ATCC BAA-935 / AF2122/97).